The chain runs to 111 residues: Cytochrome c (111 aa).

Ala1 bears the N-acetylalanine mark. Residues Cys22, Cys25, and His26 each coordinate heme c. An N6,N6,N6-trimethyllysine modification is found at Lys80. Position 88 (Met88) interacts with heme c. Residue Lys94 is modified to N6,N6,N6-trimethyllysine.

The protein belongs to the cytochrome c family. Binds 1 heme c group covalently per subunit.

Its subcellular location is the mitochondrion intermembrane space. In terms of biological role, electron carrier protein. The oxidized form of the cytochrome c heme group can accept an electron from the heme group of the cytochrome c1 subunit of cytochrome reductase. Cytochrome c then transfers this electron to the cytochrome oxidase complex, the final protein carrier in the mitochondrial electron-transport chain. The chain is Cytochrome c from Guizotia abyssinica (Niger).